The sequence spans 80 residues: Acyl carrier protein (80 aa).

The region spanning 4–79 (DEIFSKVRSI…DVVNFIKKRK (76 aa)) is the Carrier domain. Serine 39 is modified (O-(pantetheine 4'-phosphoryl)serine).

This sequence belongs to the acyl carrier protein (ACP) family. Post-translationally, 4'-phosphopantetheine is transferred from CoA to a specific serine of apo-ACP by AcpS. This modification is essential for activity because fatty acids are bound in thioester linkage to the sulfhydryl of the prosthetic group.

Its subcellular location is the cytoplasm. It participates in lipid metabolism; fatty acid biosynthesis. Functionally, carrier of the growing fatty acid chain in fatty acid biosynthesis. This is Acyl carrier protein from Borrelia garinii subsp. bavariensis (strain ATCC BAA-2496 / DSM 23469 / PBi) (Borreliella bavariensis).